We begin with the raw amino-acid sequence, 560 residues long: Hypermethylated in cancer 2 protein (560 aa).

Positions 24 to 87 (CDVIIVVENA…IYTGKLLSSD (64 aa)) constitute a BTB domain. Disordered stretches follow at residues 122–163 (RSLL…KTKR) and 183–367 (HCTT…GGRN). Composition is skewed to polar residues over residues 126–153 (NKPT…NQMS) and 183–203 (HCTT…NGSC). Residues 224-242 (EEVSPSSIPQESPQSASES) are compositionally biased toward low complexity. Over residues 243–259 (TANSASFDENPNTQNLT) the composition is skewed to polar residues. A compositionally biased stretch (basic and acidic residues) spans 296-308 (PKSEGKKGEDMER). The span at 348–362 (ENGQEQSEESGQSEN) shows a compositional bias: low complexity. C2H2-type zinc fingers lie at residues 387 to 409 (YVCI…VETH), 450 to 472 (FSCS…EKTH), 478 to 500 (FPCN…MRSH), 506 to 528 (FACE…MRVH), and 534 to 556 (YECQ…LRMH).

The protein belongs to the krueppel C2H2-type zinc-finger protein family. Hic subfamily.

The protein localises to the nucleus. In terms of biological role, transcriptional repressor. This chain is Hypermethylated in cancer 2 protein (hic2), found in Danio rerio (Zebrafish).